The sequence spans 293 residues: ATP synthase gamma chain (293 aa).

The protein belongs to the ATPase gamma chain family. As to quaternary structure, F-type ATPases have 2 components, CF(1) - the catalytic core - and CF(0) - the membrane proton channel. CF(1) has five subunits: alpha(3), beta(3), gamma(1), delta(1), epsilon(1). CF(0) has three main subunits: a, b and c.

Its subcellular location is the cell inner membrane. Its function is as follows. Produces ATP from ADP in the presence of a proton gradient across the membrane. The gamma chain is believed to be important in regulating ATPase activity and the flow of protons through the CF(0) complex. The chain is ATP synthase gamma chain from Psychrobacter arcticus (strain DSM 17307 / VKM B-2377 / 273-4).